The sequence spans 98 residues: NADH-ubiquinone oxidoreductase chain 4L (98 aa).

3 helical membrane passes run 1–21 (MSLV…GLLM), 29–49 (SLLC…LIIL), and 61–81 (IILL…LVMV).

Belongs to the complex I subunit 4L family. Core subunit of respiratory chain NADH dehydrogenase (Complex I) which is composed of 45 different subunits.

The protein resides in the mitochondrion inner membrane. It catalyses the reaction a ubiquinone + NADH + 5 H(+)(in) = a ubiquinol + NAD(+) + 4 H(+)(out). In terms of biological role, core subunit of the mitochondrial membrane respiratory chain NADH dehydrogenase (Complex I) which catalyzes electron transfer from NADH through the respiratory chain, using ubiquinone as an electron acceptor. Part of the enzyme membrane arm which is embedded in the lipid bilayer and involved in proton translocation. This is NADH-ubiquinone oxidoreductase chain 4L (MT-ND4L) from Hippopotamus amphibius (Hippopotamus).